The sequence spans 115 residues: Large ribosomal subunit protein mL60 (115 aa).

The transit peptide at 1–23 directs the protein to the mitochondrion; sequence MLGAFNSTLARFGGLVHKVPWRL. Positions 88 to 115 are disordered; the sequence is AGLQGFRKGVHKSPKWTRSTNRVNPTGF. Residues 103 to 115 show a composition bias toward polar residues; that stretch reads WTRSTNRVNPTGF.

The protein belongs to the mitochondrion-specific ribosomal protein mL60 family. As to quaternary structure, component of the mitochondrial large ribosomal subunit (mt-LSU). Mature yeast 74S mitochondrial ribosomes consist of a small (37S) and a large (54S) subunit. The 37S small subunit contains a 15S ribosomal RNA (15S mt-rRNA) and at least 32 different proteins. The 54S large subunit contains a 21S rRNA (21S mt-rRNA) and at least 45 different proteins.

Its subcellular location is the mitochondrion. Functionally, component of the mitochondrial ribosome (mitoribosome), a dedicated translation machinery responsible for the synthesis of mitochondrial genome-encoded proteins, including at least some of the essential transmembrane subunits of the mitochondrial respiratory chain. The mitoribosomes are attached to the mitochondrial inner membrane and translation products are cotranslationally integrated into the membrane. The protein is Large ribosomal subunit protein mL60 (mrpl31) of Schizosaccharomyces pombe (strain 972 / ATCC 24843) (Fission yeast).